The sequence spans 204 residues: MSKRHSSKYKIDRRMGENIWGRPKSPVNRREYGPGQHGQRRRSKISDYGLQLKAKQKLKGYYGDVTEKQFRRSYDDASKLKGDTSQNLIGILERRLDMIVYRAKFAPTIFAARQLVSHGHIRVNGVKCNIASRRVNPGDEISLGSKAQEMALVLEAQSLAERDIPDYVLPDGNTKVTFVRIPTLDEVPYPVKMEPNLVVEFYSR.

The segment at 1–46 (MSKRHSSKYKIDRRMGENIWGRPKSPVNRREYGPGQHGQRRRSKIS) is disordered. The region spanning 94–157 (RRLDMIVYRA…QEMALVLEAQ (64 aa)) is the S4 RNA-binding domain.

Belongs to the universal ribosomal protein uS4 family. Part of the 30S ribosomal subunit. Contacts protein S5. The interaction surface between S4 and S5 is involved in control of translational fidelity.

In terms of biological role, one of the primary rRNA binding proteins, it binds directly to 16S rRNA where it nucleates assembly of the body of the 30S subunit. With S5 and S12 plays an important role in translational accuracy. This is Small ribosomal subunit protein uS4 from Zymomonas mobilis subsp. mobilis (strain ATCC 31821 / ZM4 / CP4).